The following is a 213-amino-acid chain: Small ribosomal subunit protein uS4 (213 aa).

The segment at 16-53 is disordered; that stretch reads GTDLGLKSGVKPYDVKTKKSARPPGQHGVSRNKSSEYS. Positions 44 to 53 are enriched in polar residues; sequence VSRNKSSEYS. The region spanning 97 to 163 is the S4 RNA-binding domain; the sequence is SRLDNVVYRM…EKSREQLRIK (67 aa).

Belongs to the universal ribosomal protein uS4 family. In terms of assembly, part of the 30S ribosomal subunit. Contacts protein S5. The interaction surface between S4 and S5 is involved in control of translational fidelity.

One of the primary rRNA binding proteins, it binds directly to 16S rRNA where it nucleates assembly of the body of the 30S subunit. In terms of biological role, with S5 and S12 plays an important role in translational accuracy. In Psychrobacter arcticus (strain DSM 17307 / VKM B-2377 / 273-4), this protein is Small ribosomal subunit protein uS4.